The chain runs to 264 residues: Apolipoprotein A-I (264 aa).

The first 18 residues, 1–18 (MKAVVLTVAVFFLTGSQA), serve as a signal peptide directing secretion. A run of 2 repeats spans residues 67-88 (LKLL…EQIG) and 89-110 (PVTQ…QEMN). The interval 67–264 (LKLLDNWDSL…DEATKKLTTQ (198 aa)) is 10 X approximate tandem repeats. Met109 carries the post-translational modification Methionine sulfoxide. One copy of the 3; half-length repeat lies at 111–121 (KDLEEVKLKVQ). 3 consecutive repeat copies span residues 122-143 (PYLD…QQVE), 144-165 (PLGT…EKLS), and 166-187 (PLGQ…THLA). A 7; truncated repeat occupies 188–207 (PYSDELRQRLAARLEALKES). Residues 208-229 (SSLADYQAKATEHLSALGEKAK) form repeat 8. The stretch at 230–240 (PALEDLRQGLL) is one 9; half-length repeat. Residues 241–264 (PVLENLKMSFWSAVDEATKKLTTQ) form repeat 10.

Belongs to the apolipoprotein A1/A4/E family. In terms of assembly, homodimer. Interacts with APOA1BP and CLU. Component of a sperm activating protein complex (SPAP), consisting of APOA1, an immunoglobulin heavy chain, an immunoglobulin light chain and albumin. Interacts with NDRG1. Interacts with SCGB3A2. Interacts with NAXE and YJEFN3. In terms of processing, glycosylated. Palmitoylated. Post-translationally, phosphorylation sites are present in the extracellular medium.

The protein resides in the secreted. Functionally, participates in the reverse transport of cholesterol from tissues to the liver for excretion by promoting cholesterol efflux from tissues and by acting as a cofactor for the lecithin cholesterol acyltransferase (LCAT). As part of the SPAP complex, activates spermatozoa motility. This Marmota monax (Woodchuck) protein is Apolipoprotein A-I (ApoA1).